Consider the following 20-residue polypeptide: Neurotoxin BmK 18(2) (20 aa).

The LCN-type CS-alpha/beta domain occupies Arg2–Ala20.

The protein belongs to the long (4 C-C) scorpion toxin superfamily. Sodium channel inhibitor family. Alpha subfamily. In terms of tissue distribution, expressed by the venom gland.

It localises to the secreted. Binds to sodium channels (Nav) and inhibits the inactivation of the activated channels, thereby blocking neuronal transmission. The protein is Neurotoxin BmK 18(2) of Olivierus martensii (Manchurian scorpion).